Here is a 265-residue protein sequence, read N- to C-terminus: Probable cell division protein kinase ECU08_0230 (265 aa).

The Protein kinase domain occupies 4 to 263 (YILGALIGSG…IMEILENEYG (260 aa)). ATP contacts are provided by residues 10 to 18 (IGSGTYGEV) and Lys-33. The Proton acceptor role is filled by Asp-121.

It belongs to the protein kinase superfamily. CMGC Ser/Thr protein kinase family. CDC2/CDKX subfamily.

It localises to the nucleus. The enzyme catalyses L-seryl-[protein] + ATP = O-phospho-L-seryl-[protein] + ADP + H(+). It catalyses the reaction L-threonyl-[protein] + ATP = O-phospho-L-threonyl-[protein] + ADP + H(+). May play a role in the control of the eukaryotic cell cycle. This chain is Probable cell division protein kinase ECU08_0230, found in Encephalitozoon cuniculi (strain GB-M1) (Microsporidian parasite).